Here is a 322-residue protein sequence, read N- to C-terminus: Ferrochelatase (322 aa).

Positions 194 and 275 each coordinate Fe cation.

This sequence belongs to the ferrochelatase family.

The protein localises to the cytoplasm. It catalyses the reaction heme b + 2 H(+) = protoporphyrin IX + Fe(2+). The protein operates within porphyrin-containing compound metabolism; protoheme biosynthesis; protoheme from protoporphyrin-IX: step 1/1. Functionally, catalyzes the ferrous insertion into protoporphyrin IX. The chain is Ferrochelatase from Proteus mirabilis (strain HI4320).